A 55-amino-acid chain; its full sequence is Ferredoxin (55 aa).

2 consecutive 4Fe-4S ferredoxin-type domains span residues 2-27 (HIITDECISCGACAAECPVEAIHEGT) and 28-55 (GKYEVDADTCIDCGACEAVCPTGAVKAE). Residues Cys8, Cys11, Cys14, Cys18, Cys37, Cys40, Cys43, and Cys47 each coordinate [4Fe-4S] cluster.

[4Fe-4S] cluster serves as cofactor.

Functionally, ferredoxins are iron-sulfur proteins that transfer electrons in a wide variety of metabolic reactions. The sequence is that of Ferredoxin from Thermoanaerobacterium thermosaccharolyticum (Clostridium thermosaccharolyticum).